A 251-amino-acid polypeptide reads, in one-letter code: UDP-Glc:alpha-D-GlcNAc-diphosphoundecaprenol beta-1,3-glucosyltransferase WfaP (251 aa).

Belongs to the glycosyltransferase 2 family. Requires Mn(2+) as cofactor. Mg(2+) is required as a cofactor.

The protein localises to the cell inner membrane. The enzyme catalyses N-acetyl-alpha-D-glucosaminyl-di-trans,octa-cis-undecaprenyl diphosphate + UDP-alpha-D-glucose = beta-D-Glc-(1-&gt;3)-alpha-D-GlcNAc-di-trans,octa-cis-undecaprenyl diphosphate + UDP + H(+). The protein operates within bacterial outer membrane biogenesis; lipopolysaccharide biosynthesis. In terms of biological role, catalyzes the addition of Glc, the second sugar moiety of the O56-antigen repeating unit, to GlcNAc-pyrophosphate-undecaprenol. This is UDP-Glc:alpha-D-GlcNAc-diphosphoundecaprenol beta-1,3-glucosyltransferase WfaP (wfaP) from Escherichia coli.